Here is a 354-residue protein sequence, read N- to C-terminus: Uroporphyrinogen decarboxylase (354 aa).

Substrate-binding positions include 27–31 (RQAGR), Asp77, Tyr154, Ser209, and His327.

Belongs to the uroporphyrinogen decarboxylase family. Homodimer.

Its subcellular location is the cytoplasm. The enzyme catalyses uroporphyrinogen III + 4 H(+) = coproporphyrinogen III + 4 CO2. The protein operates within porphyrin-containing compound metabolism; protoporphyrin-IX biosynthesis; coproporphyrinogen-III from 5-aminolevulinate: step 4/4. Its function is as follows. Catalyzes the decarboxylation of four acetate groups of uroporphyrinogen-III to yield coproporphyrinogen-III. In Shewanella pealeana (strain ATCC 700345 / ANG-SQ1), this protein is Uroporphyrinogen decarboxylase.